A 226-amino-acid polypeptide reads, in one-letter code: Transcription repressor OFP12 (226 aa).

Positions Ser-68–Ser-87 are enriched in low complexity. The disordered stretch occupies residues Ser-68 to Pro-104. The 66-residue stretch at Val-152–Ser-217 folds into the OVATE domain.

As to quaternary structure, interacts with KNAT1, KNAT2, KNAT3 and KNAT4. As to expression, expressed in roots, shoots, stems, flower buds and siliques.

The protein resides in the nucleus. Its function is as follows. Transcriptional repressor that regulates multiple aspects of plant growth and development through the regulation of BEL1-LIKE (BLH) and KNOX TALE (KNAT) homeodomain transcription factors. The polypeptide is Transcription repressor OFP12 (OFP12) (Arabidopsis thaliana (Mouse-ear cress)).